We begin with the raw amino-acid sequence, 185 residues long: Ubiquitin-conjugating enzyme E2 5 (185 aa).

Residues methionine 1 to lysine 148 form the UBC core domain. Residue cysteine 85 is the Glycyl thioester intermediate of the active site. The interval tyrosine 146–proline 185 is disordered. A compositionally biased stretch (acidic residues) spans glutamate 154–valine 177.

It belongs to the ubiquitin-conjugating enzyme family. As to expression, expressed in developing ovules, but not in vascular tissues.

It carries out the reaction S-ubiquitinyl-[E1 ubiquitin-activating enzyme]-L-cysteine + [E2 ubiquitin-conjugating enzyme]-L-cysteine = [E1 ubiquitin-activating enzyme]-L-cysteine + S-ubiquitinyl-[E2 ubiquitin-conjugating enzyme]-L-cysteine.. The protein operates within protein modification; protein ubiquitination. In terms of biological role, accepts the ubiquitin from the E1 complex and catalyzes its covalent attachment to other proteins. This is Ubiquitin-conjugating enzyme E2 5 (UBC5) from Arabidopsis thaliana (Mouse-ear cress).